The chain runs to 172 residues: HAD-like hydrolase superfamily protein P8B7.31 (172 aa).

The Nucleophile role is filled by Asp14. Mg(2+)-binding residues include Asp14, Asp16, and Asp137. Asp16 acts as the Proton donor in catalysis.

Belongs to the HAD-like hydrolase superfamily.

The protein resides in the cytoplasm. It is found in the nucleus. The protein is HAD-like hydrolase superfamily protein P8B7.31 of Schizosaccharomyces pombe (strain 972 / ATCC 24843) (Fission yeast).